Consider the following 139-residue polypeptide: Small ribosomal subunit protein eS6 (139 aa).

Belongs to the eukaryotic ribosomal protein eS6 family.

The sequence is that of Small ribosomal subunit protein eS6 from Methanosarcina barkeri (strain Fusaro / DSM 804).